The following is a 425-amino-acid chain: Trigger factor (425 aa).

Residues 163–248 (GDTAVIDFEG…IHEIKTKELP (86 aa)) enclose the PPIase FKBP-type domain.

Belongs to the FKBP-type PPIase family. Tig subfamily.

Its subcellular location is the cytoplasm. It catalyses the reaction [protein]-peptidylproline (omega=180) = [protein]-peptidylproline (omega=0). Its function is as follows. Involved in protein export. Acts as a chaperone by maintaining the newly synthesized protein in an open conformation. Functions as a peptidyl-prolyl cis-trans isomerase. In Bacillus cereus (strain G9842), this protein is Trigger factor.